We begin with the raw amino-acid sequence, 65 residues long: Large ribosomal subunit protein bL35 (65 aa).

Belongs to the bacterial ribosomal protein bL35 family.

In Laribacter hongkongensis (strain HLHK9), this protein is Large ribosomal subunit protein bL35.